The sequence spans 154 residues: MGLSEGEWQLVLNVWGKVEADLAGHGQDVLIRLFKGHPETLEKFDKFKHLKTEAEMKASEDLKKHGNTVLTALGGILKKKGHHDAELKPLAQSHATKHKIPIKYLEFISEAIIHVLHSRHPAEFGADAQGAMNKALELFRKDIATKYKELGFHG.

The Globin domain maps to G2 to K148. S4 carries the post-translational modification Phosphoserine. H65 provides a ligand contact to nitrite. H65 serves as a coordination point for O2. T68 is modified (phosphothreonine). H94 contributes to the heme b binding site.

This sequence belongs to the globin family. Monomeric.

The protein localises to the cytoplasm. Its subcellular location is the sarcoplasm. The catalysed reaction is Fe(III)-heme b-[protein] + nitric oxide + H2O = Fe(II)-heme b-[protein] + nitrite + 2 H(+). The enzyme catalyses H2O2 + AH2 = A + 2 H2O. In terms of biological role, monomeric heme protein which primary function is to store oxygen and facilitate its diffusion within muscle tissues. Reversibly binds oxygen through a pentacoordinated heme iron and enables its timely and efficient release as needed during periods of heightened demand. Depending on the oxidative conditions of tissues and cells, and in addition to its ability to bind oxygen, it also has a nitrite reductase activity whereby it regulates the production of bioactive nitric oxide. Under stress conditions, like hypoxia and anoxia, it also protects cells against reactive oxygen species thanks to its pseudoperoxidase activity. The sequence is that of Myoglobin (MB) from Phocoenoides dalli dalli (Dall's porpoise).